We begin with the raw amino-acid sequence, 1107 residues long: Integrator complex subunit 6 homolog (1107 aa).

The 194-residue stretch at Leu-2–Met-195 folds into the VWFA domain. Disordered stretches follow at residues Arg-454 to Leu-515, Asp-542 to Ile-572, Thr-629 to Pro-801, Gln-818 to Asn-861, and Val-946 to Asn-1034. Low complexity-rich tracts occupy residues Gln-460–Gly-513 and Ser-546–Gly-562. The segment covering Thr-629 to Pro-639 has biased composition (basic and acidic residues). The span at Pro-693–Pro-801 shows a compositional bias: low complexity. Over residues Ser-846–Pro-857 the composition is skewed to pro residues. The segment covering Pro-956–Thr-975 has biased composition (low complexity). Positions Asn-976–Tyr-996 are enriched in polar residues. Low complexity predominate over residues Asn-997–Asn-1034. One can recognise an MIF4G domain in the interval Ile-1041–Ile-1103.

It belongs to the Integrator subunit 6 family. In terms of assembly, component of the Integrator complex. The core complex associates with protein phosphatase 2A subunits, to form the Integrator-PP2A (INTAC) complex.

The protein resides in the nucleus. Its subcellular location is the chromosome. Its function is as follows. Component of the integrator complex, a multiprotein complex that terminates RNA polymerase II (Pol II) transcription in the promoter-proximal region of genes. The integrator complex provides a quality checkpoint during transcription elongation by driving premature transcription termination of transcripts that are unfavorably configured for transcriptional elongation: the complex terminates transcription by (1) catalyzing dephosphorylation of the C-terminal domain (CTD) of Pol II subunit polr2a, (2) degrading the exiting nascent RNA transcript via endonuclease activity and (3) promoting the release of Pol II from bound DNA. The integrator complex is also involved in terminating the synthesis of non-coding Pol II transcripts, such as enhancer RNAs (eRNAs), small nuclear RNAs (snRNAs), telomerase RNAs and long non-coding RNAs (lncRNAs). Within the integrator complex, INTS6 acts as a molecular adapter that promotes assembly of protein phosphatase 2A (PP2A) subunits to the integrator core complex, promoting recruitment of PP2A to transcription pause-release checkpoint. This is Integrator complex subunit 6 homolog (ints6) from Dictyostelium discoideum (Social amoeba).